A 210-amino-acid chain; its full sequence is Chaperone protein TorD (210 aa).

This sequence belongs to the TorD/DmsD family. TorD subfamily.

Its subcellular location is the cytoplasm. In terms of biological role, involved in the biogenesis of TorA. Acts on TorA before the insertion of the molybdenum cofactor and, as a result, probably favors a conformation of the apoenzyme that is competent for acquiring the cofactor. The chain is Chaperone protein TorD from Salmonella newport (strain SL254).